Consider the following 279-residue polypeptide: tRNA-cytidine(32) 2-sulfurtransferase (279 aa).

The short motif at 46 to 51 is the PP-loop motif element; that stretch reads SGGKDS. 3 residues coordinate [4Fe-4S] cluster: Cys121, Cys124, and Cys212.

Belongs to the TtcA family. As to quaternary structure, homodimer. Mg(2+) serves as cofactor. [4Fe-4S] cluster is required as a cofactor.

It localises to the cytoplasm. The enzyme catalyses cytidine(32) in tRNA + S-sulfanyl-L-cysteinyl-[cysteine desulfurase] + AH2 + ATP = 2-thiocytidine(32) in tRNA + L-cysteinyl-[cysteine desulfurase] + A + AMP + diphosphate + H(+). The protein operates within tRNA modification. Functionally, catalyzes the ATP-dependent 2-thiolation of cytidine in position 32 of tRNA, to form 2-thiocytidine (s(2)C32). The sulfur atoms are provided by the cysteine/cysteine desulfurase (IscS) system. This chain is tRNA-cytidine(32) 2-sulfurtransferase, found in Marinomonas sp. (strain MWYL1).